A 283-amino-acid polypeptide reads, in one-letter code: Serine/threonine-protein phosphatase Pgam5, mitochondrial (283 aa).

The helical transmembrane segment at 7–23 threads the bilayer; it reads MYGLPSAAVAVGTALLN.

This sequence belongs to the phosphoglycerate mutase family. BPG-dependent PGAM subfamily. As to quaternary structure, interacts with skn-1.

It is found in the mitochondrion outer membrane. It carries out the reaction O-phospho-L-seryl-[protein] + H2O = L-seryl-[protein] + phosphate. The catalysed reaction is O-phospho-L-threonyl-[protein] + H2O = L-threonyl-[protein] + phosphate. Its function is as follows. Displays phosphatase activity for serine/threonine residues. Has apparently no phosphoglycerate mutase activity. In Caenorhabditis briggsae, this protein is Serine/threonine-protein phosphatase Pgam5, mitochondrial (pgam-5).